The primary structure comprises 350 residues: Biotin synthase (350 aa).

The region spanning 54–278 (REIQLSTLLS…TMPQSYVRLS (225 aa)) is the Radical SAM core domain. Cys69, Cys73, and Cys76 together coordinate [4Fe-4S] cluster. [2Fe-2S] cluster is bound by residues Cys113, Cys144, Cys204, and Arg276.

It belongs to the radical SAM superfamily. Biotin synthase family. Homodimer. [4Fe-4S] cluster is required as a cofactor. It depends on [2Fe-2S] cluster as a cofactor.

The catalysed reaction is (4R,5S)-dethiobiotin + (sulfur carrier)-SH + 2 reduced [2Fe-2S]-[ferredoxin] + 2 S-adenosyl-L-methionine = (sulfur carrier)-H + biotin + 2 5'-deoxyadenosine + 2 L-methionine + 2 oxidized [2Fe-2S]-[ferredoxin]. It participates in cofactor biosynthesis; biotin biosynthesis; biotin from 7,8-diaminononanoate: step 2/2. Functionally, catalyzes the conversion of dethiobiotin (DTB) to biotin by the insertion of a sulfur atom into dethiobiotin via a radical-based mechanism. In Neisseria meningitidis serogroup C (strain 053442), this protein is Biotin synthase.